Consider the following 215-residue polypeptide: 3-isopropylmalate dehydratase small subunit (215 aa).

It belongs to the LeuD family. LeuD type 1 subfamily. Heterodimer of LeuC and LeuD.

It carries out the reaction (2R,3S)-3-isopropylmalate = (2S)-2-isopropylmalate. Its pathway is amino-acid biosynthesis; L-leucine biosynthesis; L-leucine from 3-methyl-2-oxobutanoate: step 2/4. Functionally, catalyzes the isomerization between 2-isopropylmalate and 3-isopropylmalate, via the formation of 2-isopropylmaleate. This is 3-isopropylmalate dehydratase small subunit from Xanthomonas axonopodis pv. citri (strain 306).